The chain runs to 87 residues: Putative membrane protein insertion efficiency factor (87 aa).

This sequence belongs to the UPF0161 family.

The protein localises to the cell membrane. In terms of biological role, could be involved in insertion of integral membrane proteins into the membrane. This chain is Putative membrane protein insertion efficiency factor, found in Streptococcus pyogenes serotype M12 (strain MGAS2096).